The sequence spans 856 residues: Facilitated trehalose transporter Tret1 (856 aa).

Disordered regions lie at residues 1 to 27 and 62 to 202; these read MSGRDNRGAGGGGGGHQPLSNAMGKLK and DPFL…KATS. Topologically, residues 1-389 are cytoplasmic; it reads MSGRDNRGAG…LEVYRPTTNP (389 aa). Polar residues predominate over residues 69–80; it reads VSPQRHPQTVRT. Over residues 133-142 the composition is skewed to basic and acidic residues; that stretch reads EIREHRDRQQ. Positions 170–180 are enriched in polar residues; sequence GNSNTNNNKAA. A phosphoserine mark is found at S247, S248, S249, S319, and S321. The segment at 326–345 is disordered; that stretch reads LTSRQHFQQQRSISTDSRKS. Over residues 329 to 340 the composition is skewed to polar residues; sequence RQHFQQQRSIST. The helical transmembrane segment at 390–410 threads the bilayer; that stretch reads IFIWTQVLAALSVSLGSLVVG. The Extracellular portion of the chain corresponds to 411-439; the sequence is FVSAYTSPALVSMTDRNITSFEVTQDAGS. N-linked (GlcNAc...) asparagine glycosylation occurs at N427. Residues 440–460 form a helical membrane-spanning segment; it reads WVGGIMPLAGLAGGIAGGPLI. The Cytoplasmic segment spans residues 461 to 472; sequence EYLGRRNTILAT. The helical transmembrane segment at 473–493 threads the bilayer; it reads AVPFIVSSLLIACAVNVAMVL. The Extracellular segment spans residues 494-496; that stretch reads CGR. The helical transmembrane segment at 497-517 threads the bilayer; that stretch reads FLAGFCVGIASLSLPVYLGET. The Cytoplasmic segment spans residues 518–527; sequence VQPEVRGTLG. Residues 528–548 traverse the membrane as a helical segment; it reads LLPTAFGNIGILLCFVAGSFM. A glycan (N-linked (GlcNAc...) asparagine) is linked at N549. Residues 549 to 551 lie on the Extracellular side of the membrane; it reads NWS. A helical transmembrane segment spans residues 552-572; the sequence is MLAFLGAALPVPFLILMFLIP. The Cytoplasmic portion of the chain corresponds to 573-635; the sequence is ETPRWFVSRG…ELLKRNNLKP (63 aa). The chain crosses the membrane as a helical span at residues 636 to 656; the sequence is LSISLGLMFFQQLSGINAVIF. Residues 657–672 lie on the Extracellular side of the membrane; that stretch reads YTVQIFKDAGSTIDGN. A helical transmembrane segment spans residues 673 to 693; the sequence is ICTIIVGVVNFLATFIGIVLI. Residues 694 to 699 are Cytoplasmic-facing; it reads DRAGRK. A helical membrane pass occupies residues 700–720; it reads ILLYVSNIAMILTLFVLGGFF. Over 721–739 the chain is Extracellular; that stretch reads YCKAHGPDVSNLGWLPLTC. A helical membrane pass occupies residues 740-760; that stretch reads FVIYILGFSLGFGPIPWLMMG. The Cytoplasmic segment spans residues 761–766; sequence EILPAK. Residues 767–787 form a helical membrane-spanning segment; sequence IRGSAASVATAFNWSCTFVVT. Residues 788–800 are Extracellular-facing; it reads KTFQDLTVAMGAH. The helical transmembrane segment at 801-821 threads the bilayer; the sequence is GAFWLFGAICFVGLFFVIIYV. The Cytoplasmic portion of the chain corresponds to 822–856; it reads PETQGKTLEDIERKMMGRVRRMSSVANIKPLSFNM. 2 positions are modified to phosphoserine: S844 and S845.

The protein belongs to the major facilitator superfamily. Sugar transporter (TC 2.A.1.1) family. Trehalose transporter subfamily.

The protein resides in the cell membrane. Its function is as follows. Low-capacity facilitative transporter for trehalose. Does not transport maltose, sucrose or lactose. Mediates the bidirectional transfer of trehalose. Responsible for the transport of trehalose synthesized in the fat body and the incorporation of trehalose into other tissues that require a carbon source, thereby regulating trehalose levels in the hemolymph. This chain is Facilitated trehalose transporter Tret1, found in Drosophila erecta (Fruit fly).